The following is a 357-amino-acid chain: Serpentine receptor class epsilon-30 (357 aa).

7 consecutive transmembrane segments (helical) span residues 31–51, 61–81, 121–141, 165–185, 192–212, 253–273, and 283–303; these read IFELSSCILCGYILNLSIFVM, LMFLTVPLFAIWHELIIGKFI, LLIFGGFLQWHTIYSIVFGIL, IPIILTIISQLLSISISLAII, FLARLPFVICAPLSVLVFLFI, LVVVVIFYISICGFGIAALTF, and LIENFLFLHPYPICLTAMFSI.

This sequence belongs to the nematode receptor-like protein sre family.

The protein localises to the membrane. The sequence is that of Serpentine receptor class epsilon-30 (sre-30) from Caenorhabditis elegans.